The sequence spans 186 residues: dCTP deaminase (186 aa).

DCTP is bound at residue 107–112 (KSSYAR). Residue Glu133 is the Proton donor/acceptor of the active site. Gln152, Tyr166, and Gln176 together coordinate dCTP.

The protein belongs to the dCTP deaminase family. In terms of assembly, homotrimer.

The catalysed reaction is dCTP + H2O + H(+) = dUTP + NH4(+). It functions in the pathway pyrimidine metabolism; dUMP biosynthesis; dUMP from dCTP (dUTP route): step 1/2. In terms of biological role, catalyzes the deamination of dCTP to dUTP. The chain is dCTP deaminase from Chloroflexus aggregans (strain MD-66 / DSM 9485).